The chain runs to 412 residues: Inactive serine protease 35 (412 aa).

A signal peptide spans 1–23 (MGAMFFGLMLFTLGWTLIDGSES). Asn110 carries an N-linked (GlcNAc...) asparagine glycan. One can recognise a Peptidase S1 domain in the interval 124–407 (VYGTDSRFSI…ICLWMHGDDA (284 aa)). Cys154 and Cys170 form a disulfide bridge. Residues 192–207 (RNKGGGKRRRGSRRNR) are compositionally biased toward basic residues. Residues 192 to 246 (RNKGGGKRRRGSRRNRREVSGAGREGSQDSLKETAKAGRRRKGSARRQRAADGRP) form a disordered region. The segment covering 217–227 (GSQDSLKETAK) has biased composition (basic and acidic residues). Over residues 228–239 (AGRRRKGSARRQ) the composition is skewed to basic residues.

It belongs to the peptidase S1 family.

Its subcellular location is the secreted. In Bos taurus (Bovine), this protein is Inactive serine protease 35 (PRSS35).